The sequence spans 122 residues: Small ribosomal subunit protein uS13 (122 aa).

Residues arginine 94–lysine 122 are disordered.

This sequence belongs to the universal ribosomal protein uS13 family. Part of the 30S ribosomal subunit. Forms a loose heterodimer with protein S19. Forms two bridges to the 50S subunit in the 70S ribosome.

Located at the top of the head of the 30S subunit, it contacts several helices of the 16S rRNA. In the 70S ribosome it contacts the 23S rRNA (bridge B1a) and protein L5 of the 50S subunit (bridge B1b), connecting the 2 subunits; these bridges are implicated in subunit movement. Contacts the tRNAs in the A and P-sites. The protein is Small ribosomal subunit protein uS13 of Syntrophotalea carbinolica (strain DSM 2380 / NBRC 103641 / GraBd1) (Pelobacter carbinolicus).